The primary structure comprises 455 residues: Na(+)/H(+) antiporter NhaA (455 aa).

11 consecutive transmembrane segments (helical) span residues 31–51 (ASGILLIVSTAAALVWANSPW), 83–103 (GLMSIFFFLVGLEIKREVLIG), 113–133 (FPLIAAVGGTVVPAVIYLLCV), 141–161 (GWGIPMATDIAFALGVLILLG), 170–190 (VFVTALAIVDDIIAVLVIALF), 198–218 (VSLLVALGGVGIAFGFNLLGI), 231–251 (IWAAVLKSGVHATVAGVLLAF), 309–329 (GLQPWVSFLIMPLFAFSNAGV), 345–365 (IGVALGLFLGKPLGIWLFAWL), 383–403 (IFGASWICGIGFTMSLFIASL), and 414–434 (SKIGTLAASLVAGVCGSVVLW).

This sequence belongs to the NhaA Na(+)/H(+) (TC 2.A.33) antiporter family.

It localises to the cell inner membrane. The enzyme catalyses Na(+)(in) + 2 H(+)(out) = Na(+)(out) + 2 H(+)(in). Na(+)/H(+) antiporter that extrudes sodium in exchange for external protons. The sequence is that of Na(+)/H(+) antiporter NhaA from Koribacter versatilis (strain Ellin345).